A 498-amino-acid polypeptide reads, in one-letter code: Angiopoietin-1 (498 aa).

The N-terminal stretch at Met-1–Thr-15 is a signal peptide. The stretch at Gln-81–Ala-119 forms a coiled coil. N-linked (GlcNAc...) asparagine glycosylation is found at Asn-92, Asn-122, Asn-154, Asn-243, and Asn-295. Positions Leu-153–Leu-261 form a coiled coil. One can recognise a Fibrinogen C-terminal domain in the interval Arg-277–Asp-497. 2 disulfide bridges follow: Cys-286-Cys-315 and Cys-439-Cys-452.

In terms of assembly, homooligomer. Interacts with TEK/TIE2. Interacts with SVEP1/polydom. Interacts with THBD; this interaction significantly inhibits the generation of activated PC and TAFIa/CPB2 by the thrombin/thrombomodulin complex. Post-translationally, glycosylated.

The protein resides in the secreted. Functionally, binds and activates TEK/TIE2 receptor by inducing its dimerization and tyrosine phosphorylation. Plays an important role in the regulation of angiogenesis, endothelial cell survival, proliferation, migration, adhesion and cell spreading, reorganization of the actin cytoskeleton, but also maintenance of vascular quiescence. Required for normal angiogenesis and heart development during embryogenesis. After birth, activates or inhibits angiogenesis, depending on the context. Inhibits angiogenesis and promotes vascular stability in quiescent vessels, where endothelial cells have tight contacts. In quiescent vessels, ANGPT1 oligomers recruit TEK to cell-cell contacts, forming complexes with TEK molecules from adjoining cells, and this leads to preferential activation of phosphatidylinositol 3-kinase and the AKT1 signaling cascades. In migrating endothelial cells that lack cell-cell adhesions, ANGT1 recruits TEK to contacts with the extracellular matrix, leading to the formation of focal adhesion complexes, activation of PTK2/FAK and of the downstream kinases MAPK1/ERK2 and MAPK3/ERK1, and ultimately to the stimulation of sprouting angiogenesis. Mediates blood vessel maturation/stability. Implicated in endothelial developmental processes later and distinct from that of VEGF. Appears to play a crucial role in mediating reciprocal interactions between the endothelium and surrounding matrix and mesenchyme. In Homo sapiens (Human), this protein is Angiopoietin-1 (ANGPT1).